The primary structure comprises 224 residues: Ribonuclease HII (224 aa).

Residues 1 to 210 (MKVAGADEAG…AKKIEEKFKR (210 aa)) form the RNase H type-2 domain. Residues Asp-7, Glu-8, and Asp-105 each contribute to the a divalent metal cation site.

Belongs to the RNase HII family. Mn(2+) is required as a cofactor. It depends on Mg(2+) as a cofactor.

Its subcellular location is the cytoplasm. It carries out the reaction Endonucleolytic cleavage to 5'-phosphomonoester.. Its function is as follows. Endonuclease that specifically degrades the RNA of RNA-DNA hybrids. The sequence is that of Ribonuclease HII (rnhB) from Pyrococcus abyssi (strain GE5 / Orsay).